Here is a 71-residue protein sequence, read N- to C-terminus: Large ribosomal subunit protein bL31 (71 aa).

Zn(2+) is bound by residues Cys-16, Cys-18, Cys-37, and Cys-40.

This sequence belongs to the bacterial ribosomal protein bL31 family. Type A subfamily. Part of the 50S ribosomal subunit. Requires Zn(2+) as cofactor.

Its function is as follows. Binds the 23S rRNA. This Nitratidesulfovibrio vulgaris (strain DSM 19637 / Miyazaki F) (Desulfovibrio vulgaris) protein is Large ribosomal subunit protein bL31.